We begin with the raw amino-acid sequence, 433 residues long: Trigger factor (433 aa).

The PPIase FKBP-type domain occupies 161 to 246 (EDRATIDFTG…LKKVEERELP (86 aa)).

The protein belongs to the FKBP-type PPIase family. Tig subfamily.

Its subcellular location is the cytoplasm. It carries out the reaction [protein]-peptidylproline (omega=180) = [protein]-peptidylproline (omega=0). Involved in protein export. Acts as a chaperone by maintaining the newly synthesized protein in an open conformation. Functions as a peptidyl-prolyl cis-trans isomerase. The chain is Trigger factor from Edwardsiella ictaluri (strain 93-146).